We begin with the raw amino-acid sequence, 117 residues long: Large ribosomal subunit protein uL18 (117 aa).

The protein belongs to the universal ribosomal protein uL18 family. As to quaternary structure, part of the 50S ribosomal subunit; part of the 5S rRNA/L5/L18/L25 subcomplex. Contacts the 5S and 23S rRNAs.

Functionally, this is one of the proteins that bind and probably mediate the attachment of the 5S RNA into the large ribosomal subunit, where it forms part of the central protuberance. The polypeptide is Large ribosomal subunit protein uL18 (Pseudoalteromonas atlantica (strain T6c / ATCC BAA-1087)).